Reading from the N-terminus, the 702-residue chain is Arginine decarboxylase 1, chloroplastic (702 aa).

A chloroplast-targeting transit peptide spans 1–52 (MPALAFVDTPIDTFSSIFTPSSVSTAVVDGSCHWSPSLSSSLYRIDGWGAPY). Position 136 is an N6-(pyridoxal phosphate)lysine (Lys136). Residues Ser288, Gly325, and 374 to 377 (ESGR) contribute to the pyridoxal 5'-phosphate site. 320 to 330 (IDIGGGLGIDY) is a substrate binding site. A substrate-binding site is contributed by 436-437 (YV). The active-site Proton donor; shared with dimeric partner is Cys524. Asp525 serves as a coordination point for substrate. Residue Tyr565 participates in pyridoxal 5'-phosphate binding.

It belongs to the Orn/Lys/Arg decarboxylase class-II family. SpeA subfamily. In terms of assembly, homodimer. Only the dimer is catalytically active, as the active sites are constructed of residues from both monomers. May form a head-to-tail homodimer. Homodimer and heterodimer with ADC2. Pyridoxal 5'-phosphate serves as cofactor. It depends on Mg(2+) as a cofactor.

It localises to the plastid. It is found in the chloroplast. The protein localises to the cytoplasm. Its subcellular location is the cytosol. It catalyses the reaction L-arginine + H(+) = agmatine + CO2. The protein operates within amine and polyamine biosynthesis; agmatine biosynthesis; agmatine from L-arginine: step 1/1. In terms of biological role, required for the biosynthesis of putrescine. Catalyzes the first step of polyamine (PA) biosynthesis to produce putrescine from arginine. Is a minor contributor to basal arginine decarboxylase (ADC) activity and putrescine biosynthesis. Accumulation of putrescine plays a positive role in freezing tolerance. Production of polyamines is essential for normal seed development. Controls PA homeostasis which is crucial for normal plant growth and development. This chain is Arginine decarboxylase 1, chloroplastic, found in Arabidopsis thaliana (Mouse-ear cress).